Reading from the N-terminus, the 555-residue chain is Connector enhancer of kinase suppressor of ras 3 (555 aa).

An SAM domain is found at 7-72 (WSPKQVVDWT…LEAVDLLCAL (66 aa)). One can recognise a CRIC domain in the interval 80–174 (NMKNLVLKLR…TAVQKDCLVA (95 aa)). The PDZ domain occupies 211 to 293 (EVHLPNVRPG…GVVLLLKKRP (83 aa)). Disordered regions lie at residues 308–333 (RWKPPLVQTSPPPTTTQSPESTMDAS), 348–391 (PPPA…LDQE), and 518–538 (PFQEEGPKKKSASSSAKASSG). The span at 311–329 (PPLVQTSPPPTTTQSPEST) shows a compositional bias: low complexity. In terms of domain architecture, DUF1170 spans 325-546 (SPESTMDASL…SGEPSLLVSW (222 aa)). Residues Ser-381 and Ser-383 each carry the phosphoserine modification.

Belongs to the CNKSR family. Interacts with epithelial sodium channel ENaC. Interacts directly with SCNN1A (ENaC subunit alpha) and SCNN1B (ENaC subunit beta) C-terminal tails. Interacts with ENaC regulatory proteins NEDD4L, RAF1 and SGK1.

Its subcellular location is the cytoplasm. It localises to the apical cell membrane. Involved in transepithelial sodium transport. Regulates aldosterone-induced and epithelial sodium channel (ENaC)-mediated sodium transport through regulation of ENaC cell surface expression. Acts as a scaffold protein coordinating the assembly of an ENaC-regulatory complex (ERC). The sequence is that of Connector enhancer of kinase suppressor of ras 3 (Cnksr3) from Rattus norvegicus (Rat).